The chain runs to 335 residues: Pyruvate dehydrogenase E1 component subunit beta (335 aa).

Position 60 (Glu-60) interacts with thiamine diphosphate. K(+) is bound by residues Ala-161, Ile-162, and Asn-166.

Heterodimer of an alpha and a beta chain. The cofactor is thiamine diphosphate.

It localises to the plastid. Its subcellular location is the chloroplast. It catalyses the reaction N(6)-[(R)-lipoyl]-L-lysyl-[protein] + pyruvate + H(+) = N(6)-[(R)-S(8)-acetyldihydrolipoyl]-L-lysyl-[protein] + CO2. Its function is as follows. The pyruvate dehydrogenase complex catalyzes the overall conversion of pyruvate to acetyl-CoA and CO(2). It contains multiple copies of three enzymatic components: pyruvate dehydrogenase (E1), dihydrolipoamide acetyltransferase (E2) and lipoamide dehydrogenase (E3). The protein is Pyruvate dehydrogenase E1 component subunit beta (pdhB) of Chlorokybus atmophyticus (Soil alga).